Here is a 175-residue protein sequence, read N- to C-terminus: Alpha-crystallin B chain (175 aa).

N-acetylmethionine is present on Met-1. Position 19 is a phosphoserine (Ser-19). Ser-41 is a glycosylation site (O-linked (GlcNAc) serine). Phosphoserine occurs at positions 45 and 59. The 109-residue stretch at 56–164 folds into the sHSP domain; it reads RAPSWFDTGL…PERTIPITRE (109 aa). Residue His-83 coordinates Zn(2+). Lys-92 bears the N6-acetyllysine; partial mark. Residues His-104, Glu-106, His-111, and His-119 each coordinate Zn(2+). The disordered stretch occupies residues 146–175; sequence NGPRKQVSGPERTIPITREEKPAVTAAPKK. An N6-acetyllysine modification is found at Lys-166. An O-linked (GlcNAc) threonine glycan is attached at Thr-170.

It belongs to the small heat shock protein (HSP20) family. As to quaternary structure, heteromer composed of three CRYAA and one CRYAB subunits. Aggregates with homologous proteins, including the small heat shock protein HSPB1, to form large heteromeric complexes. Inter-subunit bridging via zinc ions enhances stability, which is crucial as there is no protein turn over in the lens. Interacts with HSPBAP1 and TTN/titin. Interacts with TMEM109; in the cellular response to DNA damage. Interacts with DES; binds rapidly during early stages of DES filament assembly and a reduced binding seen in the later stages. Interacts with TMED10; the interaction mediates the translocation from the cytoplasm into the ERGIC (endoplasmic reticulum-Golgi intermediate compartment) and thereby secretion. Interacts with ATP6V1A and with MTOR, forming a ternary complex. Lens as well as other tissues. Expressed in myocardial tissue.

Its subcellular location is the cytoplasm. It is found in the nucleus. The protein localises to the secreted. The protein resides in the lysosome. Its function is as follows. May contribute to the transparency and refractive index of the lens. Has chaperone-like activity, preventing aggregation of various proteins under a wide range of stress conditions. In lens epithelial cells, stabilizes the ATP6V1A protein, preventing its degradation by the proteasome. The polypeptide is Alpha-crystallin B chain (Homo sapiens (Human)).